Reading from the N-terminus, the 367-residue chain is 2-aminoethylphosphonate--pyruvate transaminase (367 aa).

Lys-193 is subject to N6-(pyridoxal phosphate)lysine.

The protein belongs to the class-V pyridoxal-phosphate-dependent aminotransferase family. PhnW subfamily. In terms of assembly, homodimer. Requires pyridoxal 5'-phosphate as cofactor.

It carries out the reaction (2-aminoethyl)phosphonate + pyruvate = phosphonoacetaldehyde + L-alanine. Its function is as follows. Involved in phosphonate degradation. The chain is 2-aminoethylphosphonate--pyruvate transaminase from Vibrio vulnificus (strain YJ016).